The following is a 512-amino-acid chain: Solute carrier family 2, facilitated glucose transporter member 7 (512 aa).

Residues 1 to 21 (MENKEAGTPPPIPSREGRLQP) lie on the Cytoplasmic side of the membrane. A helical transmembrane segment spans residues 22-42 (TLLLATLSAAFGSAFQYGYNL). At 43–78 (SVVNTPHKVFKSFYNETYFERHATFMDGKLMLLLWS) the chain is on the extracellular side. N-linked (GlcNAc...) asparagine glycosylation occurs at Asn-57. Residues 79–99 (CTVSMFPLGGLLGSLLVGLLV) traverse the membrane as a helical segment. Residues 100–107 (DSCGRKGT) are Cytoplasmic-facing. The chain crosses the membrane as a helical span at residues 108–128 (LLINNIFAIIPAILMGVSKVA). The Extracellular segment spans residues 129 to 138 (KAFELIVFSR). A helical transmembrane segment spans residues 139-159 (VVLGVCAGISYSALPMYLGEL). The Cytoplasmic segment spans residues 160 to 172 (APKNLRGMVGTMT). A helical transmembrane segment spans residues 173-193 (EVFVIVGVFLAQIFSLQAILG). Topologically, residues 194–198 (NPAGW) are extracellular. The helical transmembrane segment at 199–219 (PVLLALTGVPALLQLLTLPFF) threads the bilayer. Over 220 to 281 (PESPRYSLIQ…LHLCALRSLR (62 aa)) the chain is Cytoplasmic. The chain crosses the membrane as a helical span at residues 282 to 302 (WQLLSIIVLMAGQQLSGINAI). D-glucose-binding positions include 294 to 295 (QQ) and Asn-300. Over 303 to 321 (NYYADTIYTSAGVEAAHSQ) the chain is Extracellular. Residues 322-342 (YVTVGSGVVNIVMTITSAVLV) form a helical membrane-spanning segment. Residue Asn-331 coordinates D-glucose. The Cytoplasmic segment spans residues 343-350 (ERLGRRHL). A helical membrane pass occupies residues 351 to 371 (LLAGYGICGSACLVLTVVLLF). Over 372–379 (QNRVPELS) the chain is Extracellular. The chain crosses the membrane as a helical span at residues 380–400 (YLGIICVFAYIAGHSIGPSPV). The Cytoplasmic portion of the chain corresponds to 401-415 (PSVVRTEIFLQSSRR). The helical transmembrane segment at 416 to 436 (AAFMVDGAVHWLTNFIIGFLF) threads the bilayer. Over 437-445 (PSIQEAIGA) the chain is Extracellular. A helical transmembrane segment spans residues 446-466 (YSFIIFAGICLLTAIYIYVVI). Residues 467 to 512 (PETKGKTFVEINRIFAKRNRVKLPEEKEETIDAGPPTASPAKETSF) are Cytoplasmic-facing. The tract at residues 491–512 (EEKEETIDAGPPTASPAKETSF) is disordered.

It belongs to the major facilitator superfamily. Sugar transporter (TC 2.A.1.1) family. Glucose transporter subfamily. Expressed in small intestine and colon. Weakly expressed in testis and prostate.

The protein localises to the cell membrane. The protein resides in the apical cell membrane. The enzyme catalyses D-glucose(out) = D-glucose(in). The catalysed reaction is D-fructose(out) = D-fructose(in). Its activity is regulated as follows. Glucose and fructose transport are inhibited by the flavonoid apigenin. Its function is as follows. Probable sugar transporter. Even if its physiological substrate is subject to discussion, it is able to transport glucose and fructose. Does not transport galactose, 2-deoxy-d-glucose and xylose. The polypeptide is Solute carrier family 2, facilitated glucose transporter member 7 (Homo sapiens (Human)).